Here is a 666-residue protein sequence, read N- to C-terminus: Fructose-1,6-bisphosphatase class 3 (666 aa).

Belongs to the FBPase class 3 family. Mn(2+) is required as a cofactor.

It carries out the reaction beta-D-fructose 1,6-bisphosphate + H2O = beta-D-fructose 6-phosphate + phosphate. Its pathway is carbohydrate biosynthesis; gluconeogenesis. This is Fructose-1,6-bisphosphatase class 3 from Phocaeicola vulgatus (strain ATCC 8482 / DSM 1447 / JCM 5826 / CCUG 4940 / NBRC 14291 / NCTC 11154) (Bacteroides vulgatus).